A 396-amino-acid polypeptide reads, in one-letter code: Enoyl-[acyl-carrier-protein] reductase [NADH] (396 aa).

NAD(+)-binding positions include 48 to 53 (GASTGY), 74 to 75 (FE), 111 to 112 (DA), and 139 to 140 (LA). A substrate-binding site is contributed by tyrosine 225. The active-site Proton donor is the tyrosine 235. NAD(+) contacts are provided by residues lysine 244 and 273-275 (VVT).

Belongs to the TER reductase family. Monomer.

It carries out the reaction a 2,3-saturated acyl-[ACP] + NAD(+) = a (2E)-enoyl-[ACP] + NADH + H(+). It functions in the pathway lipid metabolism; fatty acid biosynthesis. Involved in the final reduction of the elongation cycle of fatty acid synthesis (FAS II). Catalyzes the reduction of a carbon-carbon double bond in an enoyl moiety that is covalently linked to an acyl carrier protein (ACP). The protein is Enoyl-[acyl-carrier-protein] reductase [NADH] of Teredinibacter turnerae (strain ATCC 39867 / T7901).